Consider the following 66-residue polypeptide: Protein KleD (66 aa).

Residues 33–52 constitute a DNA-binding region (H-T-H motif); sequence VAVRSGNEWQQVTKWVEPAR.

In Escherichia coli, this protein is Protein KleD (kleD).